A 498-amino-acid polypeptide reads, in one-letter code: SLLFLAAVGSCADDRNPLEECFRETDYEEFLEIAKNGLSTTSNPKRVVIVGAGMSGLSAAYVLANAGHQVTVLEASERAGGRVKTYRNEKEGWYANLGPMRLPEKHRIVREYIKKFDLRLNEFSQENENAWYFLQNIKKRVREVNKDPGVLEYPVKPSEVGKSAGQLYEESLRKAVEELRRTNCSYMLNKYDTYSTKEYLLKEGNLSPGAVDMIGDLLNEDSGYYVSFIESLKHDDIFAYEKRFDEIVGGMDKLPTSMYQAIQEKVHLNARVIEIQQDVKEVTVTYQTSQKETLSVTADYVIVCTTSRAARRITFEPPLPPKKAHALLSVHYRSGTKIFLTCTKKFWEDDGIHGGKSTTDLPSRFIYYPNHNFPNGVGVIIAYGIGDDANYFQALDFEDCGDIVINDLSLIHQLPKEEIQAICRPSMIQRWSLDNYAMGGITTFTPYHFQHFSEALTAPVDRIYFAGEYTAQAHGWIDSTIKSGLRAATDVNRASENK.

Positions 1 to 11 (SLLFLAAVGSC) are cleaved as a signal peptide. Cysteine 21 and cysteine 184 are joined by a disulfide. FAD is bound by residues 54–55 (MS), 74–75 (EA), 74–78 (EASER), arginine 82, and 98–101 (GPMR). Arginine 101 contacts substrate. N-linked (GlcNAc...) asparagine glycosylation is present at asparagine 183. Histidine 234 serves as a coordination point for substrate. Valine 272 provides a ligand contact to FAD. Cysteines 342 and 423 form a disulfide. Position 383 (tyrosine 383) interacts with substrate. Residues glutamate 468, 475–480 (GWIDST), and 476–480 (WIDST) contribute to the FAD site. Residue 475-476 (GW) participates in substrate binding.

The protein belongs to the flavin monoamine oxidase family. FIG1 subfamily. Homodimer; non-covalently linked. FAD is required as a cofactor. In terms of processing, N-glycosylated. Contains 18.73% carbohydrates. In terms of tissue distribution, expressed by the venom gland.

It localises to the secreted. The enzyme catalyses an L-alpha-amino acid + O2 + H2O = a 2-oxocarboxylate + H2O2 + NH4(+). The catalysed reaction is L-leucine + O2 + H2O = 4-methyl-2-oxopentanoate + H2O2 + NH4(+). Its activity is regulated as follows. Strongly inhibited by glutathione, and moderately inhibited by PMSF, acetate iodine and glutamic acid. Is also inhibited by Zn(2+) ions, but not by Ca(2+), Mg(2+) and Mn(2+). Its function is as follows. Catalyzes an oxidative deamination of predominantly hydrophobic and aromatic L-amino acids, thus producing hydrogen peroxide that may contribute to the diverse toxic effects of this enzyme. This enzyme shows activity on L-Leu. This enzyme inhibits platelet aggregation in human platelet rich plasma induced by ADP (IC(50)=3.2 mg/mL), and shows antibacterial activities on both Gram-positive and Gram-negative bacteria (P.aeruginosa, V.cholerae, S.aureus, E.faecalis and E.coli). These two effects are due to hydrogen peroxide, since they are inhibited by catalase. It also induces edema in mouse paw pads but does not show hemolytic activity. This protein may also have activities in hemorrhage, and apoptosis. This Bothrops pictus (Desert lancehead) protein is L-amino acid oxidase.